A 1124-amino-acid chain; its full sequence is Tyrosine-protein kinase JAK3 (1124 aa).

An interaction with cytokine/interferon/growth hormone receptors region spans residues Met1–Arg223. Ser17 is modified (phosphoserine). The FERM domain maps to Gly24–Gln356. Positions Gln375 to Cys475 constitute an SH2; atypical domain. In terms of domain architecture, Protein kinase 1 spans Leu521 to Ile781. A Phosphotyrosine; by autocatalysis modification is found at Tyr785. The 290-residue stretch at Leu822–Thr1111 folds into the Protein kinase 2 domain. Residues Leu828 to Val836 and Lys855 contribute to the ATP site. 2 positions are modified to phosphotyrosine: Tyr904 and Tyr939. Asp949 functions as the Proton acceptor in the catalytic mechanism. A phosphotyrosine; by autocatalysis mark is found at Tyr980 and Tyr981.

Belongs to the protein kinase superfamily. Tyr protein kinase family. JAK subfamily. In terms of assembly, interacts with STAM2 and MYO18A. Interacts with SHB. Interacts with CD69. In terms of processing, tyrosine phosphorylated in response to IL-2 and IL-4. Dephosphorylation of Tyr-980 and Tyr-981 by PTPN2 negatively regulates cytokine-mediated signaling. In terms of tissue distribution, in NK cells and an NK-like cell line but not in resting T-cells or in other tissues. The S-form is more commonly seen in hematopoietic lines, whereas the B-form is detected in cells both of hematopoietic and epithelial origins.

It localises to the endomembrane system. Its subcellular location is the cytoplasm. It catalyses the reaction L-tyrosyl-[protein] + ATP = O-phospho-L-tyrosyl-[protein] + ADP + H(+). In terms of biological role, non-receptor tyrosine kinase involved in various processes such as cell growth, development, or differentiation. Mediates essential signaling events in both innate and adaptive immunity and plays a crucial role in hematopoiesis during T-cells development. In the cytoplasm, plays a pivotal role in signal transduction via its association with type I receptors sharing the common subunit gamma such as IL2R, IL4R, IL7R, IL9R, IL15R and IL21R. Following ligand binding to cell surface receptors, phosphorylates specific tyrosine residues on the cytoplasmic tails of the receptor, creating docking sites for STATs proteins. Subsequently, phosphorylates the STATs proteins once they are recruited to the receptor. Phosphorylated STATs then form homodimer or heterodimers and translocate to the nucleus to activate gene transcription. For example, upon IL2R activation by IL2, JAK1 and JAK3 molecules bind to IL2R beta (IL2RB) and gamma chain (IL2RG) subunits inducing the tyrosine phosphorylation of both receptor subunits on their cytoplasmic domain. Then, STAT5A and STAT5B are recruited, phosphorylated and activated by JAK1 and JAK3. Once activated, dimerized STAT5 translocates to the nucleus and promotes the transcription of specific target genes in a cytokine-specific fashion. The protein is Tyrosine-protein kinase JAK3 of Homo sapiens (Human).